Reading from the N-terminus, the 202-residue chain is Urease accessory protein UreE (202 aa).

The span at 171–188 shows a compositional bias: basic and acidic residues; it reads HHGHSHSHDHDHDHDHQH. The tract at residues 171 to 202 is disordered; sequence HHGHSHSHDHDHDHDHQHGPGCTHGHRGHDHH.

It belongs to the UreE family.

Its subcellular location is the cytoplasm. Involved in urease metallocenter assembly. Binds nickel. Probably functions as a nickel donor during metallocenter assembly. The polypeptide is Urease accessory protein UreE (Burkholderia ambifaria (strain ATCC BAA-244 / DSM 16087 / CCUG 44356 / LMG 19182 / AMMD) (Burkholderia cepacia (strain AMMD))).